The chain runs to 345 residues: Mycothiol acetyltransferase (345 aa).

2 N-acetyltransferase domains span residues 6-149 (DTYE…KAME) and 164-345 (FEVL…RGRL). Glu39 provides a ligand contact to 1D-myo-inositol 2-(L-cysteinylamino)-2-deoxy-alpha-D-glucopyranoside. 76-78 (LAV) serves as a coordination point for acetyl-CoA. Glu198, Lys261, and Glu277 together coordinate 1D-myo-inositol 2-(L-cysteinylamino)-2-deoxy-alpha-D-glucopyranoside. Acetyl-CoA is bound by residues 281-283 (VCL) and 288-294 (RGRGLGQ). 1D-myo-inositol 2-(L-cysteinylamino)-2-deoxy-alpha-D-glucopyranoside is bound at residue Tyr315.

This sequence belongs to the acetyltransferase family. MshD subfamily. As to quaternary structure, monomer.

It carries out the reaction 1D-myo-inositol 2-(L-cysteinylamino)-2-deoxy-alpha-D-glucopyranoside + acetyl-CoA = mycothiol + CoA + H(+). Its function is as follows. Catalyzes the transfer of acetyl from acetyl-CoA to desacetylmycothiol (Cys-GlcN-Ins) to form mycothiol. This chain is Mycothiol acetyltransferase, found in Corynebacterium jeikeium (strain K411).